Reading from the N-terminus, the 205-residue chain is RNA pyrophosphohydrolase (205 aa).

Residues G6–R149 form the Nudix hydrolase domain. A Nudix box motif is present at residues G38–G59. Residues G178–D205 are disordered. The segment covering R186–G195 has biased composition (basic residues).

The protein belongs to the Nudix hydrolase family. RppH subfamily. A divalent metal cation is required as a cofactor.

Accelerates the degradation of transcripts by removing pyrophosphate from the 5'-end of triphosphorylated RNA, leading to a more labile monophosphorylated state that can stimulate subsequent ribonuclease cleavage. In Xanthomonas campestris pv. campestris (strain 8004), this protein is RNA pyrophosphohydrolase.